We begin with the raw amino-acid sequence, 128 residues long: Cytochrome c oxidase subunit 5B, mitochondrial (128 aa).

The transit peptide at 1-30 directs the protein to the mitochondrion; sequence MKRGSAALEVRELKMQTPTASCVLSTQRAN. An N6-acetyllysine mark is found at Lys-67 and Lys-85. Cys-90, Cys-92, Cys-112, and Cys-115 together coordinate Zn(2+). Lys-120 bears the N6-acetyllysine mark.

It belongs to the cytochrome c oxidase 5b family. Expressed in testis. Not expressed in brain, heart, liver, kidney, spleen, lung, duodenum, muscle, epididymis, vagina, uterus and ovary.

The protein resides in the mitochondrion inner membrane. This protein is one of the nuclear-coded polypeptide chains of cytochrome c oxidase, the terminal oxidase in mitochondrial electron transport. This chain is Cytochrome c oxidase subunit 5B, mitochondrial, found in Vulpes vulpes (Red fox).